We begin with the raw amino-acid sequence, 140 residues long: Large ribosomal subunit protein uL11 (140 aa).

This sequence belongs to the universal ribosomal protein uL11 family. As to quaternary structure, part of the ribosomal stalk of the 50S ribosomal subunit. Interacts with L10 and the large rRNA to form the base of the stalk. L10 forms an elongated spine to which L12 dimers bind in a sequential fashion forming a multimeric L10(L12)X complex. One or more lysine residues are methylated.

Forms part of the ribosomal stalk which helps the ribosome interact with GTP-bound translation factors. The sequence is that of Large ribosomal subunit protein uL11 from Geobacter metallireducens (strain ATCC 53774 / DSM 7210 / GS-15).